Consider the following 295-residue polypeptide: Pyridoxal 5'-phosphate synthase subunit PdxS (295 aa).

Asp25 serves as a coordination point for D-ribose 5-phosphate. Lys82 acts as the Schiff-base intermediate with D-ribose 5-phosphate in catalysis. Gly154 is a binding site for D-ribose 5-phosphate. Arg166 is a D-glyceraldehyde 3-phosphate binding site. Residues Gly215 and 236-237 contribute to the D-ribose 5-phosphate site; that span reads GS.

It belongs to the PdxS/SNZ family. In the presence of PdxT, forms a dodecamer of heterodimers.

The catalysed reaction is aldehydo-D-ribose 5-phosphate + D-glyceraldehyde 3-phosphate + L-glutamine = pyridoxal 5'-phosphate + L-glutamate + phosphate + 3 H2O + H(+). Its pathway is cofactor biosynthesis; pyridoxal 5'-phosphate biosynthesis. Catalyzes the formation of pyridoxal 5'-phosphate from ribose 5-phosphate (RBP), glyceraldehyde 3-phosphate (G3P) and ammonia. The ammonia is provided by the PdxT subunit. Can also use ribulose 5-phosphate and dihydroxyacetone phosphate as substrates, resulting from enzyme-catalyzed isomerization of RBP and G3P, respectively. The protein is Pyridoxal 5'-phosphate synthase subunit PdxS of Bacillus cereus (strain B4264).